The sequence spans 379 residues: ATP phosphoribosyltransferase regulatory subunit (379 aa).

Belongs to the class-II aminoacyl-tRNA synthetase family. HisZ subfamily. As to quaternary structure, heteromultimer composed of HisG and HisZ subunits.

Its subcellular location is the cytoplasm. It functions in the pathway amino-acid biosynthesis; L-histidine biosynthesis; L-histidine from 5-phospho-alpha-D-ribose 1-diphosphate: step 1/9. Required for the first step of histidine biosynthesis. May allow the feedback regulation of ATP phosphoribosyltransferase activity by histidine. The chain is ATP phosphoribosyltransferase regulatory subunit from Gluconobacter oxydans (strain 621H) (Gluconobacter suboxydans).